The primary structure comprises 322 residues: Phosphatidylserine decarboxylase proenzyme (322 aa).

Catalysis depends on charge relay system; for autoendoproteolytic cleavage activity residues D90, H147, and S254. The active-site Schiff-base intermediate with substrate; via pyruvic acid; for decarboxylase activity is S254. Residue S254 is modified to Pyruvic acid (Ser); by autocatalysis. Residues 295–322 (VEPAPLPTEEIKAEHDASPLVDNKKDDT) form a disordered region. The segment covering 303-322 (EEIKAEHDASPLVDNKKDDT) has biased composition (basic and acidic residues).

This sequence belongs to the phosphatidylserine decarboxylase family. PSD-B subfamily. Prokaryotic type I sub-subfamily. Heterodimer of a large membrane-associated beta subunit and a small pyruvoyl-containing alpha subunit. The cofactor is pyruvate. Post-translationally, is synthesized initially as an inactive proenzyme. Formation of the active enzyme involves a self-maturation process in which the active site pyruvoyl group is generated from an internal serine residue via an autocatalytic post-translational modification. Two non-identical subunits are generated from the proenzyme in this reaction, and the pyruvate is formed at the N-terminus of the alpha chain, which is derived from the carboxyl end of the proenzyme. The autoendoproteolytic cleavage occurs by a canonical serine protease mechanism, in which the side chain hydroxyl group of the serine supplies its oxygen atom to form the C-terminus of the beta chain, while the remainder of the serine residue undergoes an oxidative deamination to produce ammonia and the pyruvoyl prosthetic group on the alpha chain. During this reaction, the Ser that is part of the protease active site of the proenzyme becomes the pyruvoyl prosthetic group, which constitutes an essential element of the active site of the mature decarboxylase.

Its subcellular location is the cell membrane. The catalysed reaction is a 1,2-diacyl-sn-glycero-3-phospho-L-serine + H(+) = a 1,2-diacyl-sn-glycero-3-phosphoethanolamine + CO2. The protein operates within phospholipid metabolism; phosphatidylethanolamine biosynthesis; phosphatidylethanolamine from CDP-diacylglycerol: step 2/2. Functionally, catalyzes the formation of phosphatidylethanolamine (PtdEtn) from phosphatidylserine (PtdSer). The chain is Phosphatidylserine decarboxylase proenzyme from Salmonella agona (strain SL483).